We begin with the raw amino-acid sequence, 445 residues long: Zinc finger protein SHOOT GRAVITROPISM 5 (445 aa).

Positions 22–31 are enriched in low complexity; it reads SSSDPFLSSS. Residues 22 to 59 form a disordered region; the sequence is SSSDPFLSSSENGVTTTNTSTQKRKRRPAGTPDPDAEV. A compositionally biased stretch (polar residues) spans 32–42; that stretch reads ENGVTTTNTST. 3 consecutive C2H2-type zinc fingers follow at residues 73 to 95, 115 to 145, and 151 to 178; these read YICE…RRRH, YVCP…RRKH, and WVCE…TRGH. Zn(2+)-binding residues include C153, C156, H169, C173, C180, C182, H195, and C199. Residues 178 to 201 form a CCHC-type 2; atypical zinc finger; the sequence is HSCDCGRVFSRVESFIEHQDNCSA. Positions 188–200 are SHR-binding; that stretch reads RVESFIEHQDNCS. 2 disordered regions span residues 203–253 and 281–314; these read RVHR…LEGR and SSNQ…LNLS. Residues 214–248 show a composition bias toward polar residues; the sequence is TAVTVPACSSRTASTVSTPSSETNYGGTVAVTTPQ. The segment covering 281–293 has biased composition (low complexity); it reads SSNQNPNQENQQQ. Residues 340–397 adopt a coiled-coil conformation; the sequence is MKIAMKEKAYAEEAKREAKRQREIAENEFANAKKIRQKAQAELERAKFLKEQSMKKIS.

In terms of tissue distribution, mainly expressed in the endodermis, the gravity-sensing tissue in inflorescence stems. Mostly present in stems and flowers, and, to a lower extent, in seedlings, hypocotyls, roots and the shoot apical meristem (SAM).

The protein localises to the nucleus. Functionally, transcription factor involved in inflorescence stems gravitropism, probably by regulating starch accumulation in amyloplasts of graviperceptive cells. Required for stem circumnutation movements. Regulates lateral organ morphogenesis and gravitropic responses. Acts cooperatively with IDD16 to control silique and branche orientation. Involved in the establishment of auxin gradients through the regulation of auxin biosynthesis and transport. The sequence is that of Zinc finger protein SHOOT GRAVITROPISM 5 from Arabidopsis thaliana (Mouse-ear cress).